A 192-amino-acid chain; its full sequence is Large ribosomal subunit protein bL9 (192 aa).

Residues 172–192 are disordered; it reads DALRPEDFFDPEADGIDEDEA. Over residues 179–192 the composition is skewed to acidic residues; sequence FFDPEADGIDEDEA.

Belongs to the bacterial ribosomal protein bL9 family.

Its function is as follows. Binds to the 23S rRNA. The polypeptide is Large ribosomal subunit protein bL9 (Rhizobium etli (strain CIAT 652)).